The chain runs to 291 residues: Elongation factor Ts (291 aa).

The tract at residues 79–82 is involved in Mg(2+) ion dislocation from EF-Tu; the sequence is TDFV.

Belongs to the EF-Ts family.

It is found in the cytoplasm. Its function is as follows. Associates with the EF-Tu.GDP complex and induces the exchange of GDP to GTP. It remains bound to the aminoacyl-tRNA.EF-Tu.GTP complex up to the GTP hydrolysis stage on the ribosome. The sequence is that of Elongation factor Ts from Anaplasma marginale (strain Florida).